Here is a 394-residue protein sequence, read N- to C-terminus: MAVLDLALQGLAIFGCILFFVLWFMHFLSIVYTRLHLNKKVSDKQPYSKLPGVSLLKPLKGVDSNLINNLETFFELDYPKFEILLCVQDLDDPAVDVCKKLLGKYPSVDAKLFIGGKKVGINPKINNLMPGYEVAKYDLIWICDSGIKVKPDTLTDMANQMTEKVGLVHGLPYVADRQGFAATLEQVYFGTSHPRSYISANVTGIKCVTGMSCLMRKEVLDQAGGLIAFAQYIAEDYFMAKAIADRGWKFSMATQVAMQNSGCYSISQFQSRMIRWAKLRINMLPATIICEPISECFVASLIIGWAAHHIFRWDIMVFFMCHCLAWFIFDYIQLRGVQGGPLNFSKLDYAVAWFIRESMTIYIFLSALWDPTISWRTGRYRLRCGGTAEEILDV.

At 1–10 (MAVLDLALQG) the chain is on the lumenal side. Residues 11–32 (LAIFGCILFFVLWFMHFLSIVY) traverse the membrane as a helical segment. At 33–195 (TRLHLNKKVS…QVYFGTSHPR (163 aa)) the chain is on the cytoplasmic side. Position 92 (Asp-92) is a short sequence motif, D1. Asp-144 is a short sequence motif (D2). A helical membrane pass occupies residues 196-215 (SYISANVTGIKCVTGMSCLM). At 216-287 (RKEVLDQAGG…KLRINMLPAT (72 aa)) the chain is on the lumenal side. Residue Asp-236 is a short sequence motif, D3. The active-site Proton acceptor is Asp-236. The short motif at 272–276 (RMIRW) is the (Q/R)XXRW element. Residues 288 to 304 (IICEPISECFVASLIIG) traverse the membrane as a helical segment. The Cytoplasmic portion of the chain corresponds to 305-309 (WAAHH). A helical membrane pass occupies residues 310–328 (IFRWDIMVFFMCHCLAWFI). At 329–348 (FDYIQLRGVQGGPLNFSKLD) the chain is on the lumenal side. Residues 349 to 369 (YAVAWFIRESMTIYIFLSALW) traverse the membrane as a helical segment. Over 370–394 (DPTISWRTGRYRLRCGGTAEEILDV) the chain is Cytoplasmic.

The protein belongs to the glycosyltransferase 2 family.

Its subcellular location is the golgi apparatus membrane. The enzyme catalyses an N-acylsphing-4-enine + UDP-alpha-D-glucose = a beta-D-glucosyl-(1&lt;-&gt;1')-N-acylsphing-4-enine + UDP + H(+). It carries out the reaction UDP-alpha-D-xylose + an N-acylsphing-4-enine = a beta-D-xylosyl-(1&lt;-&gt;1')-N-acylsphing-4-enine + UDP + H(+). It catalyses the reaction N-(9Z-octadecenoyl)-sphing-4-enine + UDP-alpha-D-xylose = beta-D-xylosyl-(1&lt;-&gt;1')-N-(9Z-octadecenoyl)-sphing-4-enine + UDP + H(+). It participates in lipid metabolism; sphingolipid metabolism. Its function is as follows. Participates in the initial step of the glucosylceramide-based glycosphingolipid/GSL synthetic pathway at the cytosolic surface of the Golgi. Catalyzes the transfer of glucose from UDP-glucose to ceramide to produce glucosylceramide/GlcCer (such as beta-D-glucosyl-(1&lt;-&gt;1')-N-acylsphing-4-enine). Glucosylceramide is the core component of glycosphingolipids/GSLs, amphipathic molecules consisting of a ceramide lipid moiety embedded in the outer leaflet of the membrane, linked to one of hundreds of different externally oriented oligosaccharide structures. Glycosphingolipids are essential components of membrane microdomains that mediate membrane trafficking and signal transduction. They are implicated in many fundamental cellular processes, including growth, differentiation, migration, morphogenesis, cell-to-cell and cell-to-matrix interactions. Catalyzes the synthesis of xylosylceramide/XylCer (such as beta-D-xylosyl-(1&lt;-&gt;1')-N-acylsphing-4-enine) using UDP-Xyl as xylose donor. The sequence is that of Ceramide glucosyltransferase-B (ugcg-b) from Xenopus laevis (African clawed frog).